The following is a 91-amino-acid chain: Large ribosomal subunit protein bL27 (91 aa).

It belongs to the bacterial ribosomal protein bL27 family.

The polypeptide is Large ribosomal subunit protein bL27 (Chromobacterium violaceum (strain ATCC 12472 / DSM 30191 / JCM 1249 / CCUG 213 / NBRC 12614 / NCIMB 9131 / NCTC 9757 / MK)).